We begin with the raw amino-acid sequence, 685 residues long: DNA ligase (685 aa).

Residues 34-38 (DAVFD), 83-84 (SL), and Glu-113 contribute to the NAD(+) site. The active-site N6-AMP-lysine intermediate is the Lys-115. 4 residues coordinate NAD(+): Arg-136, Glu-173, Lys-297, and Lys-321. Residues Cys-415, Cys-418, Cys-433, and Cys-438 each coordinate Zn(2+). One can recognise a BRCT domain in the interval 607 to 685 (QEKLQFSGKT…EQELMTLISN (79 aa)).

Belongs to the NAD-dependent DNA ligase family. LigA subfamily. Requires Mg(2+) as cofactor. Mn(2+) serves as cofactor.

It carries out the reaction NAD(+) + (deoxyribonucleotide)n-3'-hydroxyl + 5'-phospho-(deoxyribonucleotide)m = (deoxyribonucleotide)n+m + AMP + beta-nicotinamide D-nucleotide.. In terms of biological role, DNA ligase that catalyzes the formation of phosphodiester linkages between 5'-phosphoryl and 3'-hydroxyl groups in double-stranded DNA using NAD as a coenzyme and as the energy source for the reaction. It is essential for DNA replication and repair of damaged DNA. This chain is DNA ligase, found in Prochlorococcus marinus (strain SARG / CCMP1375 / SS120).